The chain runs to 250 residues: Geranylgeranylglyceryl phosphate synthase (250 aa).

Residues Asp23 and Ser52 each coordinate Mg(2+). Residues 170–176 (YIEAGSG), 202–203 (GG), and 224–225 (GT) each bind sn-glycerol 1-phosphate.

This sequence belongs to the GGGP/HepGP synthase family. Group II subfamily. Requires Mg(2+) as cofactor.

The protein localises to the cytoplasm. The catalysed reaction is sn-glycerol 1-phosphate + (2E,6E,10E)-geranylgeranyl diphosphate = sn-3-O-(geranylgeranyl)glycerol 1-phosphate + diphosphate. It functions in the pathway membrane lipid metabolism; glycerophospholipid metabolism. Functionally, prenyltransferase that catalyzes the transfer of the geranylgeranyl moiety of geranylgeranyl diphosphate (GGPP) to the C3 hydroxyl of sn-glycerol-1-phosphate (G1P). This reaction is the first ether-bond-formation step in the biosynthesis of archaeal membrane lipids. The protein is Geranylgeranylglyceryl phosphate synthase of Methanobrevibacter smithii (strain ATCC 35061 / DSM 861 / OCM 144 / PS).